Reading from the N-terminus, the 492-residue chain is GTPase Der (492 aa).

Residues 3–166 enclose the EngA-type G 1 domain; the sequence is PVIALVGRPN…AVLGIFPKDA (164 aa). GTP is bound by residues 9 to 16, 56 to 60, and 118 to 121; these read GRPNVGKS, DTGGI, and NKVD. The interval 166–190 is disordered; sequence AGEPEEGAEAEEEVQEGQEAKRIPG. Acidic residues predominate over residues 168–181; it reads EPEEGAEAEEEVQE. Residues 197–370 form the EngA-type G 2 domain; the sequence is IKLAIIGRPN…SVQAAFHSAV (174 aa). GTP is bound by residues 203-210, 250-254, and 315-318; these read GRPNVGKS, DTAGV, and NKWD. One can recognise a KH-like domain in the interval 371–455; sequence TRWPTSRLTQ…PIRIEYKGGE (85 aa). Residues 453-492 form a disordered region; that stretch reads GGENPYEGNKNKLTDRQVNKKRRLMSHHKKAEKKRKDKRK. A compositionally biased stretch (basic and acidic residues) spans 461-470; the sequence is NKNKLTDRQV. Residues 471–492 show a composition bias toward basic residues; that stretch reads NKKRRLMSHHKKAEKKRKDKRK.

The protein belongs to the TRAFAC class TrmE-Era-EngA-EngB-Septin-like GTPase superfamily. EngA (Der) GTPase family. Associates with the 50S ribosomal subunit.

Its function is as follows. GTPase that plays an essential role in the late steps of ribosome biogenesis. The chain is GTPase Der from Ectopseudomonas mendocina (strain ymp) (Pseudomonas mendocina).